A 48-amino-acid chain; its full sequence is AEDRKSLSGLTEQEAQEFGTLYTQGVAFVAVIAVVAHALVWAWRPWLQ.

Over 1 to 20 the chain is Cytoplasmic; sequence AEDRKSLSGLTEQEAQEFGT. A helical transmembrane segment spans residues 21-43; that stretch reads LYTQGVAFVAVIAVVAHALVWAW. Residue His37 coordinates a bacteriochlorophyll. Over 44-48 the chain is Periplasmic; that stretch reads RPWLQ.

It belongs to the antenna complex beta subunit family. The core complex is formed by different alpha and beta chains, binding bacteriochlorophyll molecules, and arranged most probably in tetrameric structures disposed around the reaction center. The non-pigmented gamma chains may constitute additional components.

The protein localises to the cell inner membrane. Functionally, antenna complexes are light-harvesting systems, which transfer the excitation energy to the reaction centers. The sequence is that of Light-harvesting polypeptide B-885 beta-1 chain from Rhodocyclus tenuis (Rhodospirillum tenue).